We begin with the raw amino-acid sequence, 200 residues long: Anthranilate synthase component 2 (200 aa).

One can recognise a Glutamine amidotransferase type-1 domain in the interval 3–196 (NILLLDNIDS…IHWASLKYIT (194 aa)). An L-glutamine-binding site is contributed by 57-59 (GPS). Residue Cys84 is the Nucleophile; for GATase activity of the active site. L-glutamine-binding positions include Gln88 and 134 to 135 (SL). Catalysis depends on for GATase activity residues His170 and Glu172.

Heterotetramer consisting of two non-identical subunits: a beta subunit (TrpG) and a large alpha subunit (TrpE).

It catalyses the reaction chorismate + L-glutamine = anthranilate + pyruvate + L-glutamate + H(+). It participates in amino-acid biosynthesis; L-tryptophan biosynthesis; L-tryptophan from chorismate: step 1/5. In terms of biological role, part of a heterotetrameric complex that catalyzes the two-step biosynthesis of anthranilate, an intermediate in the biosynthesis of L-tryptophan. In the first step, the glutamine-binding beta subunit (TrpG) of anthranilate synthase (AS) provides the glutamine amidotransferase activity which generates ammonia as a substrate that, along with chorismate, is used in the second step, catalyzed by the large alpha subunit of AS (TrpE) to produce anthranilate. In the absence of TrpG, TrpE can synthesize anthranilate directly from chorismate and high concentrations of ammonia. In Buchnera aphidicola subsp. Acyrthosiphon pisum (strain APS) (Acyrthosiphon pisum symbiotic bacterium), this protein is Anthranilate synthase component 2 (trpG).